The following is a 1057-amino-acid chain: Glycine dehydrogenase (decarboxylating), mitochondrial (1057 aa).

Residues 1 to 86 constitute a mitochondrion transit peptide; the sequence is MERARRLANR…GVGYPSQSRS (86 aa). The span at 18-27 shows a compositional bias: basic and acidic residues; it reads SEAKQNRKTE. Residues 18 to 47 are disordered; sequence SEAKQNRKTESTSTTTTTPLPFSLSGSSSR. A compositionally biased stretch (low complexity) spans 28–47; the sequence is STSTTTTTPLPFSLSGSSSR. An N6-(pyridoxal phosphate)lysine modification is found at Lys-792.

The protein belongs to the GcvP family. In terms of assembly, homodimer. The glycine cleavage system is composed of four proteins: P, T, L and H. The cofactor is pyridoxal 5'-phosphate. In terms of tissue distribution, highly expressed in leaves. Detected in roots and embryos.

It is found in the mitochondrion. The enzyme catalyses N(6)-[(R)-lipoyl]-L-lysyl-[glycine-cleavage complex H protein] + glycine + H(+) = N(6)-[(R)-S(8)-aminomethyldihydrolipoyl]-L-lysyl-[glycine-cleavage complex H protein] + CO2. Its function is as follows. The glycine cleavage system catalyzes the degradation of glycine. The P protein binds the alpha-amino group of glycine through its pyridoxal phosphate cofactor; CO(2) is released and the remaining methylamine moiety is then transferred to the lipoamide cofactor of the H protein. The polypeptide is Glycine dehydrogenase (decarboxylating), mitochondrial (GDCSP) (Pisum sativum (Garden pea)).